The chain runs to 381 residues: Succinyl-diaminopimelate desuccinylase 1 (381 aa).

His-70 is a Zn(2+) binding site. Asp-72 is a catalytic residue. A Zn(2+)-binding site is contributed by Asp-103. Glu-136 acts as the Proton acceptor in catalysis. The Zn(2+) site is built by Glu-137, Glu-165, and His-354.

It belongs to the peptidase M20A family. DapE subfamily. Homodimer. Requires Zn(2+) as cofactor. Co(2+) is required as a cofactor.

The enzyme catalyses N-succinyl-(2S,6S)-2,6-diaminopimelate + H2O = (2S,6S)-2,6-diaminopimelate + succinate. Its pathway is amino-acid biosynthesis; L-lysine biosynthesis via DAP pathway; LL-2,6-diaminopimelate from (S)-tetrahydrodipicolinate (succinylase route): step 3/3. Its function is as follows. Catalyzes the hydrolysis of N-succinyl-L,L-diaminopimelic acid (SDAP), forming succinate and LL-2,6-diaminopimelate (DAP), an intermediate involved in the bacterial biosynthesis of lysine and meso-diaminopimelic acid, an essential component of bacterial cell walls. The polypeptide is Succinyl-diaminopimelate desuccinylase 1 (Ruegeria sp. (strain TM1040) (Silicibacter sp.)).